A 313-amino-acid chain; its full sequence is Small glutamine-rich tetratricopeptide repeat-containing protein alpha (313 aa).

The segment at 69 to 97 is disordered; that stretch reads KELPPDLRSPQETPPSEEDSAEAERLKTE. Phosphoserine is present on Ser-77. Position 81 is a phosphothreonine (Thr-81). Phosphoserine is present on Ser-84. TPR repeat units follow at residues 91-124, 125-158, and 159-192; these read AERL…NPAN, AVYF…DPSY, and SKAY…DPDN. An N6-acetyllysine modification is found at Lys-137. The residue at position 301 (Ser-301) is a Phosphoserine. At Thr-303 the chain carries Phosphothreonine. The residue at position 305 (Ser-305) is a Phosphoserine.

Belongs to the SGT family. Homodimer. Homooligomer. Interacts with DNAJC5 and DNAJC5B. Interacts (via TPR repeats) with HSP90AA1. Interacts (via Gln-rich region) with SLC2A1. Interacts with HSP90AB1. Interacts (via TPR repeats) with HSPA8/Hsc70; the interaction is direct. Interacts with BAG6 (via ubiquitin-like domain); interaction prevents interaction between BAG6 and RNF126. Forms a multiprotein complex, at least composed of DNAJB12, DNAJB14, HSPA8/Hsc70 and SGTA; interaction with DNAJB14 and HSPA8/Hsc70 is direct.

The protein resides in the cytoplasm. The protein localises to the nucleus. Co-chaperone that binds misfolded and hydrophobic patches-containing client proteins in the cytosol. Mediates their targeting to the endoplasmic reticulum but also regulates their sorting to the proteasome when targeting fails. Functions in tail-anchored/type II transmembrane proteins membrane insertion constituting with ASNA1 and the BAG6 complex a targeting module. Functions upstream of the BAG6 complex and ASNA1, binding more rapidly the transmembrane domain of newly synthesized proteins. It is also involved in the regulation of the endoplasmic reticulum-associated misfolded protein catabolic process via its interaction with BAG6: collaborates with the BAG6 complex to maintain hydrophobic substrates in non-ubiquitinated states. Competes with RNF126 for interaction with BAG6, preventing the ubiquitination of client proteins associated with the BAG6 complex. Binds directly to HSC70 and HSP70 and regulates their ATPase activity. This chain is Small glutamine-rich tetratricopeptide repeat-containing protein alpha (SGTA), found in Bos taurus (Bovine).